Reading from the N-terminus, the 131-residue chain is Profilin-6 (131 aa).

A disulfide bridge links cysteine 13 with cysteine 115. The Involved in PIP2 interaction signature appears at 81–97; that stretch reads VVIRGKKGAGGITIKKT. Position 111 is a phosphothreonine (threonine 111).

The protein belongs to the profilin family. Occurs in many kinds of cells as a complex with monomeric actin in a 1:1 ratio. Phosphorylated by MAP kinases.

It localises to the cytoplasm. The protein localises to the cytoskeleton. Its function is as follows. Binds to actin and affects the structure of the cytoskeleton. At high concentrations, profilin prevents the polymerization of actin, whereas it enhances it at low concentrations. In Corylus avellana (European hazel), this protein is Profilin-6.